The following is a 1252-amino-acid chain: DNA-directed RNA polymerase subunit beta (1252 aa).

This sequence belongs to the RNA polymerase beta chain family. As to quaternary structure, the RNAP catalytic core consists of 2 alpha, 1 beta, 1 beta' and 1 omega subunit. When a sigma factor is associated with the core the holoenzyme is formed, which can initiate transcription.

It carries out the reaction RNA(n) + a ribonucleoside 5'-triphosphate = RNA(n+1) + diphosphate. DNA-dependent RNA polymerase catalyzes the transcription of DNA into RNA using the four ribonucleoside triphosphates as substrates. In Chlamydia caviae (strain ATCC VR-813 / DSM 19441 / 03DC25 / GPIC) (Chlamydophila caviae), this protein is DNA-directed RNA polymerase subunit beta.